The primary structure comprises 218 residues: Nuclear cap-binding protein subunit 2 (218 aa).

MRNA-binding positions include tyrosine 24, tyrosine 49, 118–122, 129–133, and 139–140; these read TIDLD, RQFGR, and QV. Residues 46–124 form the RRM domain; the sequence is ATIYVGNLSF…REITIDLDPG (79 aa). Basic residues predominate over residues 176–194; the sequence is DPHKNHHHHHHGHHHHHGQ. Positions 176–200 are disordered; sequence DPHKNHHHHHHGHHHHHGQPHAAAA.

This sequence belongs to the RRM NCBP2 family. As to quaternary structure, component of the nuclear cap-binding complex (CBC).

It is found in the nucleus. Component of the cap-binding complex (CBC) involved in the nuclear export of capped U snRNAs. The CBC complex is required for efficient pre-mRNA splicing through efficient commitment complex and spliceosome formation; and involved in rRNA processing at sites A0, A1 and A2. The protein is Nuclear cap-binding protein subunit 2 (CBC2) of Eremothecium gossypii (strain ATCC 10895 / CBS 109.51 / FGSC 9923 / NRRL Y-1056) (Yeast).